The chain runs to 229 residues: Urease accessory protein UreF (229 aa).

This sequence belongs to the UreF family. UreD, UreF and UreG form a complex that acts as a GTP-hydrolysis-dependent molecular chaperone, activating the urease apoprotein by helping to assemble the nickel containing metallocenter of UreC. The UreE protein probably delivers the nickel.

It is found in the cytoplasm. Required for maturation of urease via the functional incorporation of the urease nickel metallocenter. The chain is Urease accessory protein UreF from Staphylococcus epidermidis (strain ATCC 35984 / DSM 28319 / BCRC 17069 / CCUG 31568 / BM 3577 / RP62A).